Consider the following 277-residue polypeptide: Inositol monophosphatase 1 (277 aa).

Mg(2+) is bound by residues Glu-70, Asp-90, Ile-92, and Asp-93. A substrate-binding site is contributed by Glu-70. A substrate-binding site is contributed by 92 to 95 (IDGT). Phosphothreonine is present on Thr-168. Substrate is bound by residues 194–196 (GTA), Glu-213, and Asp-220. Asp-220 contacts Mg(2+).

Belongs to the inositol monophosphatase superfamily. As to quaternary structure, homodimer. It depends on Mg(2+) as a cofactor. The N-terminus is blocked.

The protein localises to the cytoplasm. The enzyme catalyses a myo-inositol phosphate + H2O = myo-inositol + phosphate. The catalysed reaction is 1D-myo-inositol 1-phosphate + H2O = myo-inositol + phosphate. It carries out the reaction 1D-myo-inositol 2-phosphate + H2O = myo-inositol + phosphate. It catalyses the reaction 1D-myo-inositol 3-phosphate + H2O = myo-inositol + phosphate. The enzyme catalyses 1D-myo-inositol 4-phosphate + H2O = myo-inositol + phosphate. The catalysed reaction is 1D-myo-inositol 5-phosphate + H2O = myo-inositol + phosphate. It carries out the reaction 1D-myo-inositol 6-phosphate + H2O = myo-inositol + phosphate. It catalyses the reaction scyllo-inositol 1-phosphate + H2O = scyllo-inositol + phosphate. The enzyme catalyses alpha-D-galactose 1-phosphate + H2O = D-galactose + phosphate. The catalysed reaction is alpha-D-glucose 1-phosphate + H2O = D-glucose + phosphate. It carries out the reaction D-glucose 6-phosphate + H2O = D-glucose + phosphate. It catalyses the reaction beta-D-fructose 1-phosphate + H2O = D-fructose + phosphate. The enzyme catalyses glycerol 2-phosphate + H2O = glycerol + phosphate. The catalysed reaction is adenosine 2'-phosphate + H2O = adenosine + phosphate. It functions in the pathway polyol metabolism; myo-inositol biosynthesis; myo-inositol from D-glucose 6-phosphate: step 2/2. Its activity is regulated as follows. Activity with myo-inositol monophosphate and D-galactose 1-phosphate is inhibited by Li(+), Ca(2+) and Mn(2+), but also by Mg(2+) at concentrations above 3 mM. Functionally, phosphatase involved in the dephosphorylation of myo-inositol monophosphate to generate myo-inositol. Is also able to dephosphorylate scyllo-inositol-phosphate, myo-inositol 1,4-diphosphate, scyllo-inositol-1,3-diphosphate and scyllo-inositol-1,4-diphosphate. Also dephosphorylates in vitro other sugar-phosphates including D-galactose-1-phosphate, glucose-1-phosphate, glucose-6-phosphate, fructose-1-phosphate, beta-glycerophosphate and 2'-AMP. Responsible for the provision of inositol required for synthesis of phosphatidylinositol and polyphosphoinositides, and involved in maintaining normal brain function. Has been implicated as the pharmacological target for lithium Li(+) action in brain. Is equally active with myo-inositol monophosphate and D-galactose 1-phosphate. This Bos taurus (Bovine) protein is Inositol monophosphatase 1 (IMPA1).